Here is a 466-residue protein sequence, read N- to C-terminus: L-seryl-tRNA(Sec) selenium transferase (466 aa).

Lys-292 bears the N6-(pyridoxal phosphate)lysine mark.

It belongs to the SelA family. Requires pyridoxal 5'-phosphate as cofactor.

It localises to the cytoplasm. The catalysed reaction is L-seryl-tRNA(Sec) + selenophosphate + H(+) = L-selenocysteinyl-tRNA(Sec) + phosphate. Its pathway is aminoacyl-tRNA biosynthesis; selenocysteinyl-tRNA(Sec) biosynthesis; selenocysteinyl-tRNA(Sec) from L-seryl-tRNA(Sec) (bacterial route): step 1/1. Converts seryl-tRNA(Sec) to selenocysteinyl-tRNA(Sec) required for selenoprotein biosynthesis. The sequence is that of L-seryl-tRNA(Sec) selenium transferase from Rhizobium meliloti (strain 1021) (Ensifer meliloti).